The following is a 592-amino-acid chain: V-type ATP synthase alpha chain (592 aa).

232-239 provides a ligand contact to ATP; it reads GPFGAGKT.

Belongs to the ATPase alpha/beta chains family.

It catalyses the reaction ATP + H2O + 4 H(+)(in) = ADP + phosphate + 5 H(+)(out). In terms of biological role, produces ATP from ADP in the presence of a proton gradient across the membrane. The V-type alpha chain is a catalytic subunit. This is V-type ATP synthase alpha chain from Clostridium botulinum (strain Alaska E43 / Type E3).